Here is a 391-residue protein sequence, read N- to C-terminus: Adhesion defective protein 1 (391 aa).

Residues 180-190 show a composition bias toward polar residues; that stretch reads SQSRPPQNQIQ. Disordered stretches follow at residues 180–217 and 366–391; these read SQSR…PDSP and VEGE…RTKV. Positions 201–211 are enriched in low complexity; that stretch reads SESVNINSSSS. Positions 370–383 are enriched in polar residues; that stretch reads NPNNNPNFYSSDML.

The protein belongs to the adn1/SEU family.

It localises to the nucleus. Its function is as follows. Probable transcriptional regulator involved in cell adhesion. This is Adhesion defective protein 1 (adn1) from Schizosaccharomyces pombe (strain 972 / ATCC 24843) (Fission yeast).